Consider the following 131-residue polypeptide: MAQIPARGDCSRQLTRKQAGDAWEAAARRWLESKGLRFIAANVRERGGEIDLIMRDGKTTVFVEVRYRRSGLYGGAAASVTRSKQHKLLHTARLWLARQNGSFDTVDCRFDVLAFTGNEIEWFRDAFNDHS.

The protein belongs to the UPF0102 family.

The sequence is that of UPF0102 protein YraN from Salmonella typhimurium (strain LT2 / SGSC1412 / ATCC 700720).